The primary structure comprises 670 residues: MWDGFSNSFWSRDYITGINRAQRLINEGVEQNEKLLQLLHIRAKSASSCSDLLFKSFSKFNKHHPLNEESNDLPSDAAIHQLYESYLMEASLHKKLGEQLNILVINPFANWSKKYSRRVDEIVSAAIVKINNYNSRFSHVNSKKSNLTDRKPIPTSRKSNKSDSLASALSQLDINPSNVNKFDGLINIVDHPYTAEEFANVLLKLMKASTVKRKSYSHLGDYELVTNCSLLFEAIKTTFGLEKDSYVVKAGNQLIQHGLIRLLGIRRVFENDPEIDAQFTTKSQQLLKSYHLSILEVDPYFQVNDPITATNDDPVLQKYNLAYDNLEQCRHELELYLFMVFKDLEQAELDRLNAVKSVLVECSNYSGNFIPSLNSIFIDNLNSFKNLDSLRDMSTQINKHYTGYFIPVSNNELSTKDEYLFLQKSSLTEDNLIVSLVPKILAYLLDAYSYERDEEVLSCVWTTEVPLKDAFDLKSVLRKTDNVESVLNACVEKYTLSSITCSLRLCLLEFPDSLIRSSFYDYFKAIYTTYTDFEDLDHRLYSIKKCLLHLHSTPLHILEEIIRHLSAYAISIRMKDGQIRHLAKIISPCVLRPPDDLNIIPVEDTHPTLLVIDLINEFENLFADLERPSTPPVEIERALTPITTSPQKLKLPRSSSPCKNPSPTRRFRPF.

In terms of domain architecture, F-BAR spans 3–392; it reads DGFSNSFWSR…SFKNLDSLRD (390 aa). The interval 141–161 is disordered; it reads NSKKSNLTDRKPIPTSRKSNK. The region spanning 425 to 622 is the Rho-GAP domain; the sequence is SSLTEDNLIV…DLINEFENLF (198 aa). Phosphothreonine is present on threonine 640. The segment covering 641–663 has biased composition (polar residues); it reads PITTSPQKLKLPRSSSPCKNPSP. Positions 641–670 are disordered; that stretch reads PITTSPQKLKLPRSSSPCKNPSPTRRFRPF. Phosphoserine is present on serine 645.

The protein resides in the cytoplasm. In Schizosaccharomyces pombe (strain 972 / ATCC 24843) (Fission yeast), this protein is Probable Rho-GTPase-activating protein 9 (rga9).